The sequence spans 440 residues: Chromosome partition protein MukF (440 aa).

Residues 208–236 (LSETSGTLRELQDTLEAAGDKLQANLLRI) are leucine-zipper.

Belongs to the MukF family. In terms of assembly, interacts, and probably forms a ternary complex, with MukE and MukB via its C-terminal region. The complex formation is stimulated by calcium or magnesium. It is required for an interaction between MukE and MukB.

It is found in the cytoplasm. The protein resides in the nucleoid. In terms of biological role, involved in chromosome condensation, segregation and cell cycle progression. May participate in facilitating chromosome segregation by condensation DNA from both sides of a centrally located replisome during cell division. Not required for mini-F plasmid partitioning. Probably acts via its interaction with MukB and MukE. Overexpression results in anucleate cells. It has a calcium binding activity. In Escherichia coli O127:H6 (strain E2348/69 / EPEC), this protein is Chromosome partition protein MukF.